A 510-amino-acid chain; its full sequence is RNA-splicing ligase RtcB homolog (510 aa).

Residues aspartate 124, cysteine 127, histidine 232, histidine 264, and histidine 358 each contribute to the Mn(2+) site. 231 to 235 lines the GMP pocket; it reads NHYAE. GMP is bound by residues 358 to 359, 407 to 410, serine 414, 433 to 436, and lysine 509; these read HN, GGTM, and HGAG. Histidine 433 acts as the GMP-histidine intermediate in catalysis.

This sequence belongs to the RtcB family. As to quaternary structure, catalytic component of the tRNA-splicing ligase complex. The cofactor is Mn(2+).

The enzyme catalyses a 3'-end 3'-phospho-ribonucleotide-RNA + a 5'-end dephospho-ribonucleoside-RNA + GTP = a ribonucleotidyl-ribonucleotide-RNA + GMP + diphosphate. The catalysed reaction is a 3'-end 2',3'-cyclophospho-ribonucleotide-RNA + a 5'-end dephospho-ribonucleoside-RNA + GTP + H2O = a ribonucleotidyl-ribonucleotide-RNA + GMP + diphosphate + H(+). Its function is as follows. Catalytic subunit of the tRNA-splicing ligase complex that acts by directly joining spliced tRNA halves to mature-sized tRNAs by incorporating the precursor-derived splice junction phosphate into the mature tRNA as a canonical 3',5'-phosphodiester. May act as an RNA ligase with broad substrate specificity, and may function toward other RNAs. This Trichoplax adhaerens (Trichoplax reptans) protein is RNA-splicing ligase RtcB homolog.